The primary structure comprises 360 residues: Chorismate synthase (360 aa).

R47 provides a ligand contact to NADP(+). Residues 124-126 (RAS), G286, 301-305 (KPTAT), and R327 each bind FMN.

This sequence belongs to the chorismate synthase family. In terms of assembly, homotetramer. The cofactor is FMNH2.

It catalyses the reaction 5-O-(1-carboxyvinyl)-3-phosphoshikimate = chorismate + phosphate. Its pathway is metabolic intermediate biosynthesis; chorismate biosynthesis; chorismate from D-erythrose 4-phosphate and phosphoenolpyruvate: step 7/7. Functionally, catalyzes the anti-1,4-elimination of the C-3 phosphate and the C-6 proR hydrogen from 5-enolpyruvylshikimate-3-phosphate (EPSP) to yield chorismate, which is the branch point compound that serves as the starting substrate for the three terminal pathways of aromatic amino acid biosynthesis. This reaction introduces a second double bond into the aromatic ring system. The protein is Chorismate synthase of Synechococcus sp. (strain RCC307).